The chain runs to 505 residues: Catalase (505 aa).

Residues 1 to 25 form a disordered region; it reads MSKQDGKLTGLFGAPVSDRENSMTA. Catalysis depends on residues His56 and Asn129. Tyr339 is a binding site for heme.

It belongs to the catalase family. As to quaternary structure, homodimer. Requires heme as cofactor.

It catalyses the reaction 2 H2O2 = O2 + 2 H2O. In terms of biological role, decomposes hydrogen peroxide into water and oxygen; serves to protect cells from the toxic effects of hydrogen peroxide. The chain is Catalase (katA) from Staphylococcus warneri.